The sequence spans 378 residues: Galanin receptor 2b (378 aa).

Residues Met1–Ser30 lie on the Extracellular side of the membrane. A helical transmembrane segment spans residues Val31–Leu51. Topologically, residues Leu52–Thr62 are cytoplasmic. A helical transmembrane segment spans residues Asn63 to Phe83. The Extracellular portion of the chain corresponds to Gln84–Lys101. The cysteines at positions 100 and 177 are disulfide-linked. Residues Val102–Val123 traverse the membrane as a helical segment. The Cytoplasmic segment spans residues Asp124 to Asn143. The helical transmembrane segment at Ala144 to Ser164 threads the bilayer. Residues Tyr165–Lys187 are Extracellular-facing. Residues Val188–Ser208 traverse the membrane as a helical segment. Residues Tyr209–Lys238 lie on the Cytoplasmic side of the membrane. Residues Met239 to Leu259 traverse the membrane as a helical segment. The Extracellular segment spans residues Cys260–Arg276. Residues Leu277–Val297 traverse the membrane as a helical segment. Residues Ser298–Pro378 are Cytoplasmic-facing. The interval Glu339–Gln362 is disordered.

This sequence belongs to the G-protein coupled receptor 1 family. In terms of tissue distribution, expressed in neurons in the ventral area of the interpeduncular nucleus (IPN) where expression often overlaps with spx1.

Its subcellular location is the membrane. In terms of biological role, receptor for the hormone galanin. Receptor for the hormones spexin-1 and spexin-2. The sequence is that of Galanin receptor 2b from Danio rerio (Zebrafish).